We begin with the raw amino-acid sequence, 430 residues long: Enolase (430 aa).

Gln-163 provides a ligand contact to (2R)-2-phosphoglycerate. Glu-205 serves as the catalytic Proton donor. 3 residues coordinate Mg(2+): Asp-242, Glu-288, and Asp-315. Lys-340, Arg-369, Ser-370, and Lys-391 together coordinate (2R)-2-phosphoglycerate. The Proton acceptor role is filled by Lys-340.

It belongs to the enolase family. Mg(2+) serves as cofactor.

The protein localises to the cytoplasm. The protein resides in the secreted. It localises to the cell surface. It carries out the reaction (2R)-2-phosphoglycerate = phosphoenolpyruvate + H2O. Its pathway is carbohydrate degradation; glycolysis; pyruvate from D-glyceraldehyde 3-phosphate: step 4/5. Catalyzes the reversible conversion of 2-phosphoglycerate (2-PG) into phosphoenolpyruvate (PEP). It is essential for the degradation of carbohydrates via glycolysis. This chain is Enolase, found in Acidobacterium capsulatum (strain ATCC 51196 / DSM 11244 / BCRC 80197 / JCM 7670 / NBRC 15755 / NCIMB 13165 / 161).